The primary structure comprises 825 residues: 5E5 antigen (825 aa).

Residues 126–825 (LSRDGYETET…RPRPSPKSPR (700 aa)) are disordered. Positions 157–180 (PRAPPEPPDPGAPRPPPDPGPLPL) are enriched in pro residues. Residues 191–200 (VQVSTEQLLM) show a composition bias toward polar residues. Over residues 217–237 (TRGDRTQEGGEKPREQREGPR) the composition is skewed to basic and acidic residues. The segment covering 247-256 (QQEESPQQEP) has biased composition (low complexity). Basic and acidic residues-rich tracts occupy residues 257 to 277 (SSERGDSVGEREARSPGHEGE), 315 to 342 (VPKDRGEGGREWGPEAAQEHGEAARDWT), and 392 to 406 (QEREPGPRDRVESPR). Over residues 437 to 449 (RRPRKRRGRKGRM) the composition is skewed to basic residues. Residues 455–477 (TTATSASATGGPAEEAGASAPEG) show a composition bias toward low complexity. The segment covering 485 to 505 (GRARGPRQQARRRHGPQRRRG) has biased composition (basic residues). The span at 524 to 536 (GTTSGEQRADQSQ) shows a compositional bias: polar residues. Low complexity predominate over residues 537–562 (TLPALAGAPTAHAHAVPGPGPAAATL). Positions 565–575 (RGRRGSWRGGR) are enriched in basic residues. Residues 576 to 588 (RGGGAGASGGGRG) show a composition bias toward gly residues. Residues 721–733 (FPPPPPTRPPPVL) show a composition bias toward pro residues. Low complexity predominate over residues 734-750 (LPLLRLTCAGDPGASRP).

Expressed in neurons.

It localises to the nucleus. Might have DNA-binding ability. The sequence is that of 5E5 antigen from Rattus norvegicus (Rat).